A 243-amino-acid polypeptide reads, in one-letter code: Terpene cyclase ptmB (243 aa).

3 consecutive transmembrane segments (helical) span residues Ile-19–Ile-39, Tyr-48–Ile-68, and Gly-78–Ala-98. A glycan (N-linked (GlcNAc...) asparagine) is linked at Asn-111. The next 4 membrane-spanning stretches (helical) occupy residues Leu-112–Ala-132, Ser-137–Cys-157, Leu-172–Trp-194, and Leu-205–Trp-225.

This sequence belongs to the paxB family.

The protein localises to the membrane. It functions in the pathway secondary metabolite biosynthesis. Terpene cyclase; part of the gene cluster that mediates the biosynthesis of the indole diterpenes penitrems. The geranylgeranyl diphosphate (GGPP) synthase ptmG catalyzes the first step in penitrem biosynthesis via conversion of farnesyl pyrophosphate and isopentyl pyrophosphate into geranylgeranyl pyrophosphate (GGPP). Condensation of indole-3-glycerol phosphate with GGPP by the prenyl transferase ptmC then forms 3-geranylgeranylindole (3-GGI). Epoxidation by the FAD-dependent monooxygenase ptmM leads to a epoxidized-GGI that is substrate of the terpene cyclase ptmB for cyclization to yield paspaline. Paspaline is subsequently converted to 13-desoxypaxilline by the cytochrome P450 monooxygenase ptmP, the latter being then converted to paxilline by the cytochrome P450 monooxygenase ptmQ. Paxilline is converted to beta-paxitriol via C-10 ketoreduction by the short-chain dehydrogenase ptmH which can be monoprenylated at the C-20 by the indole diterpene prenyltransferase ptmD. A two-step elimination (acetylation and elimination) process performed by the O-acetyltransferase ptmV and ptmI leads to the production of the prenylated form of penijanthine. The FAD-linked oxidoreductase ptmO then converts the prenylated form of penijanthine into PC-M5 which is in turn transformed into PC-M4 by the aromatic dimethylallyltransferase ptmE. Five sequential oxidative transformations performed by the cytochrome P450 monooxygenases ptmK, ptmU, ptmL, ptmN and ptmJ yield the various penitrem compounds. PtmK, ptmU and ptmM are involved in the formation of the key bicyclic ring of penitrem C via the formation of the intermediates secopenitrem D and penitrem D. PtmL catalyzes the epoxidation of penitrem D and C to yield penitrem B and F, respectively. PtmJ catalyzes the last benzylic hydroxylation to convert penitrem B to prenitrem E and penitrem F to penitrem A. In Penicillium ochrochloron, this protein is Terpene cyclase ptmB.